The sequence spans 467 residues: Cruzipain (467 aa).

The N-terminal stretch at 1 to 18 (MSGWARALLLAAVLVVMA) is a signal peptide. Residues 19–122 (CLVPAATASL…RVPVKVEVVG (104 aa)) constitute a propeptide, activation peptide. Disulfide bonds link C144–C185, C178–C223, and C277–C325. The active site involves C147. N-linked (GlcNAc...) asparagine glycosylation occurs at N169. Residue H284 is part of the active site. N292 carries N-linked (GlcNAc...) asparagine glycosylation. Residue N304 is part of the active site. The disordered stretch occupies residues 333 to 355 (SAVVGGPGPTPEPTTTTTTSAPG). Over residues 345 to 354 (PTTTTTTSAP) the composition is skewed to low complexity. An N-linked (GlcNAc...) asparagine glycan is attached at N377.

It belongs to the peptidase C1 family.

The enzyme catalyses Broad endopeptidase specificity similar to that of cathepsin L.. Strongly inhibited by E-64 (L-trans-epoxysuccinylleucylamido(4-guanidino)butane), Leupeptin, and N-alpha-p-tosyl-L-lysine chloromethyl ketone. Its function is as follows. Hydrolyzes chromogenic peptides at the carboxyl Arg or Lys; requires at least one more amino acid, preferably Arg, Phe, Val or Leu, between the terminal Arg or Lys and the amino-blocking group. In terms of biological role, the cysteine protease may play an important role in the development and differentiation of the parasites at several stages of their life cycle. The protein is Cruzipain of Trypanosoma cruzi.